A 486-amino-acid chain; its full sequence is Protein nucleotidyltransferase YdiU (486 aa).

Residues Gly-90, Gly-92, Arg-93, Lys-113, Asp-125, Gly-126, Arg-176, and Arg-183 each contribute to the ATP site. The active-site Proton acceptor is Asp-252. The Mg(2+) site is built by Asn-253 and Asp-262. Position 262 (Asp-262) interacts with ATP.

It belongs to the SELO family. The cofactor is Mg(2+). Requires Mn(2+) as cofactor.

The enzyme catalyses L-seryl-[protein] + ATP = 3-O-(5'-adenylyl)-L-seryl-[protein] + diphosphate. The catalysed reaction is L-threonyl-[protein] + ATP = 3-O-(5'-adenylyl)-L-threonyl-[protein] + diphosphate. It carries out the reaction L-tyrosyl-[protein] + ATP = O-(5'-adenylyl)-L-tyrosyl-[protein] + diphosphate. It catalyses the reaction L-histidyl-[protein] + UTP = N(tele)-(5'-uridylyl)-L-histidyl-[protein] + diphosphate. The enzyme catalyses L-seryl-[protein] + UTP = O-(5'-uridylyl)-L-seryl-[protein] + diphosphate. The catalysed reaction is L-tyrosyl-[protein] + UTP = O-(5'-uridylyl)-L-tyrosyl-[protein] + diphosphate. Functionally, nucleotidyltransferase involved in the post-translational modification of proteins. It can catalyze the addition of adenosine monophosphate (AMP) or uridine monophosphate (UMP) to a protein, resulting in modifications known as AMPylation and UMPylation. In Pseudomonas putida (strain ATCC 700007 / DSM 6899 / JCM 31910 / BCRC 17059 / LMG 24140 / F1), this protein is Protein nucleotidyltransferase YdiU.